A 402-amino-acid polypeptide reads, in one-letter code: Flagellar hook protein FlgE (402 aa).

It belongs to the flagella basal body rod proteins family.

The protein resides in the bacterial flagellum basal body. The polypeptide is Flagellar hook protein FlgE (flgE) (Escherichia coli (strain K12)).